The primary structure comprises 206 residues: Ephrin-A4 (206 aa).

The first 25 residues, 1 to 25 (MRLLPLLRTVLWAALLGSRLPGCSS), serve as a signal peptide directing secretion. The Ephrin RBD domain occupies 26–158 (LRHPIYWNSS…RLQVSVCCKE (133 aa)). Asn-33 carries an N-linked (GlcNAc...) asparagine glycan. Positions 41–43 (RGD) match the Cell attachment site motif. 2 disulfides stabilise this stretch: Cys-58-Cys-99 and Cys-86-Cys-147. Asn-98 is a glycosylation site (N-linked (GlcNAc...) asparagine). Residues 161–180 (SSHESAHPVGSPGESGTSGW) form a disordered region. Ser-175 is lipidated: GPI-anchor amidated serine. Positions 176 to 206 (GTSGWRGGHAPSPLCLLLLLLLPILRLLRVL) are cleaved as a propeptide — removed in mature form.

The protein belongs to the ephrin family. Expressed in myogenic progenitor cells.

The protein localises to the cell membrane. In terms of biological role, cell surface GPI-bound ligand for Eph receptors, a family of receptor tyrosine kinases which are crucial for migration, repulsion and adhesion during neuronal, vascular and epithelial development. Binds promiscuously Eph receptors residing on adjacent cells, leading to contact-dependent bidirectional signaling into neighboring cells. May play a role in the interaction between activated B-lymphocytes and dendritic cells in tonsils. This is Ephrin-A4 (Efna4) from Mus musculus (Mouse).